Consider the following 362-residue polypeptide: Methylthioribose-1-phosphate isomerase (362 aa).

Residue Asp252 is the Proton donor of the active site.

The protein belongs to the eIF-2B alpha/beta/delta subunits family. MtnA subfamily.

The protein resides in the cytoplasm. It is found in the nucleus. The enzyme catalyses 5-(methylsulfanyl)-alpha-D-ribose 1-phosphate = 5-(methylsulfanyl)-D-ribulose 1-phosphate. It participates in amino-acid biosynthesis; L-methionine biosynthesis via salvage pathway; L-methionine from S-methyl-5-thio-alpha-D-ribose 1-phosphate: step 1/6. Catalyzes the interconversion of methylthioribose-1-phosphate (MTR-1-P) into methylthioribulose-1-phosphate (MTRu-1-P). This is Methylthioribose-1-phosphate isomerase from Drosophila virilis (Fruit fly).